Reading from the N-terminus, the 466-residue chain is Uronate isomerase (466 aa).

It belongs to the metallo-dependent hydrolases superfamily. Uronate isomerase family.

It carries out the reaction D-glucuronate = D-fructuronate. It catalyses the reaction aldehydo-D-galacturonate = keto-D-tagaturonate. It functions in the pathway carbohydrate metabolism; pentose and glucuronate interconversion. In Brucella canis (strain ATCC 23365 / NCTC 10854 / RM-666), this protein is Uronate isomerase.